The sequence spans 447 residues: Tubulin beta chain (447 aa).

The GTP site is built by glutamine 11, glutamate 69, serine 138, glycine 142, threonine 143, glycine 144, asparagine 204, and asparagine 226. Residue glutamate 69 participates in Mg(2+) binding. A disordered region spans residues 419 to 447 (VSEYQQYQDATADEEGEYEDEDQEAEDDM). Over residues 429–447 (TADEEGEYEDEDQEAEDDM) the composition is skewed to acidic residues.

Belongs to the tubulin family. In terms of assembly, dimer of alpha and beta chains. A typical microtubule is a hollow water-filled tube with an outer diameter of 25 nm and an inner diameter of 15 nM. Alpha-beta heterodimers associate head-to-tail to form protofilaments running lengthwise along the microtubule wall with the beta-tubulin subunit facing the microtubule plus end conferring a structural polarity. Microtubules usually have 13 protofilaments but different protofilament numbers can be found in some organisms and specialized cells. Mg(2+) serves as cofactor.

Its subcellular location is the cytoplasm. It is found in the cytoskeleton. Functionally, tubulin is the major constituent of microtubules, a cylinder consisting of laterally associated linear protofilaments composed of alpha- and beta-tubulin heterodimers. Microtubules grow by the addition of GTP-tubulin dimers to the microtubule end, where a stabilizing cap forms. Below the cap, tubulin dimers are in GDP-bound state, owing to GTPase activity of alpha-tubulin. This Hordeum vulgare (Barley) protein is Tubulin beta chain (TUBB).